A 393-amino-acid polypeptide reads, in one-letter code: uncharacterized protein (393 aa).

2 disordered regions span residues 77 to 118 (DSNN…SIRP) and 259 to 296 (INNNNNNNNNNSNNNNNNNNSNNNDNNNNINTKVDESN). Positions 79–92 (NNNNNNNNNNNNNN) are enriched in low complexity. The segment covering 103-114 (IRQSLSSPQQLV) has biased composition (polar residues). Residues 259–289 (INNNNNNNNNNSNNNNNNNNSNNNDNNNNIN) show a composition bias toward low complexity.

This is an uncharacterized protein from Dictyostelium discoideum (Social amoeba).